Consider the following 227-residue polypeptide: Phosphoglycolate phosphatase (227 aa).

The Nucleophile role is filled by aspartate 8. The Mg(2+) site is built by aspartate 8 and aspartate 10. Residue lysine 150 participates in substrate binding. Positions 173 and 177 each coordinate Mg(2+).

This sequence belongs to the archaeal SPP-like hydrolase family. Mg(2+) is required as a cofactor.

It catalyses the reaction 2-phosphoglycolate + H2O = glycolate + phosphate. Catalyzes the dephosphorylation of 2-phosphoglycolate. The chain is Phosphoglycolate phosphatase from Sulfolobus acidocaldarius (strain ATCC 33909 / DSM 639 / JCM 8929 / NBRC 15157 / NCIMB 11770).